A 315-amino-acid polypeptide reads, in one-letter code: Methionyl-tRNA formyltransferase (315 aa).

111-114 (SLLP) is a binding site for (6S)-5,6,7,8-tetrahydrofolate.

Belongs to the Fmt family.

It carries out the reaction L-methionyl-tRNA(fMet) + (6R)-10-formyltetrahydrofolate = N-formyl-L-methionyl-tRNA(fMet) + (6S)-5,6,7,8-tetrahydrofolate + H(+). Functionally, attaches a formyl group to the free amino group of methionyl-tRNA(fMet). The formyl group appears to play a dual role in the initiator identity of N-formylmethionyl-tRNA by promoting its recognition by IF2 and preventing the misappropriation of this tRNA by the elongation apparatus. The sequence is that of Methionyl-tRNA formyltransferase from Flavobacterium johnsoniae (strain ATCC 17061 / DSM 2064 / JCM 8514 / BCRC 14874 / CCUG 350202 / NBRC 14942 / NCIMB 11054 / UW101) (Cytophaga johnsonae).